Reading from the N-terminus, the 170-residue chain is Shikimate kinase (170 aa).

11 to 16 is an ATP binding site; sequence GAGKTT. T15 provides a ligand contact to Mg(2+). Substrate contacts are provided by D33, R57, and G80. R119 serves as a coordination point for ATP. R141 is a substrate binding site.

Belongs to the shikimate kinase family. Monomer. The cofactor is Mg(2+).

It is found in the cytoplasm. The enzyme catalyses shikimate + ATP = 3-phosphoshikimate + ADP + H(+). It functions in the pathway metabolic intermediate biosynthesis; chorismate biosynthesis; chorismate from D-erythrose 4-phosphate and phosphoenolpyruvate: step 5/7. Functionally, catalyzes the specific phosphorylation of the 3-hydroxyl group of shikimic acid using ATP as a cosubstrate. This is Shikimate kinase from Azobacteroides pseudotrichonymphae genomovar. CFP2.